Consider the following 1113-residue polypeptide: uncharacterized protein (1113 aa).

ATP is bound at residue 313–320; it reads GPPGTGKS.

Belongs to the DNA2/NAM7 helicase family.

This is an uncharacterized protein from Mycoplasma genitalium (strain ATCC 33530 / DSM 19775 / NCTC 10195 / G37) (Mycoplasmoides genitalium).